The following is a 273-amino-acid chain: 4-hydroxy-tetrahydrodipicolinate reductase (273 aa).

NAD(+) is bound by residues Gly-11–Met-16 and Glu-36. Arg-37 serves as a coordination point for NADP(+). NAD(+)-binding positions include Gly-100 to Thr-102 and Ala-124 to Tyr-127. His-157 (proton donor/acceptor) is an active-site residue. Residue His-158 coordinates (S)-2,3,4,5-tetrahydrodipicolinate. The Proton donor role is filled by Lys-161. Gly-167 to Thr-168 contacts (S)-2,3,4,5-tetrahydrodipicolinate.

It belongs to the DapB family.

The protein localises to the cytoplasm. The enzyme catalyses (S)-2,3,4,5-tetrahydrodipicolinate + NAD(+) + H2O = (2S,4S)-4-hydroxy-2,3,4,5-tetrahydrodipicolinate + NADH + H(+). The catalysed reaction is (S)-2,3,4,5-tetrahydrodipicolinate + NADP(+) + H2O = (2S,4S)-4-hydroxy-2,3,4,5-tetrahydrodipicolinate + NADPH + H(+). It participates in amino-acid biosynthesis; L-lysine biosynthesis via DAP pathway; (S)-tetrahydrodipicolinate from L-aspartate: step 4/4. In terms of biological role, catalyzes the conversion of 4-hydroxy-tetrahydrodipicolinate (HTPA) to tetrahydrodipicolinate. In Acinetobacter baylyi (strain ATCC 33305 / BD413 / ADP1), this protein is 4-hydroxy-tetrahydrodipicolinate reductase.